The primary structure comprises 422 residues: Serine--tRNA ligase (422 aa).

227–229 contributes to the L-serine binding site; the sequence is TSE. Residues 258–260 and V274 contribute to the ATP site; that span reads RRE. Residue E281 participates in L-serine binding. 345 to 348 provides a ligand contact to ATP; it reads ELTS. Residue T380 participates in L-serine binding.

It belongs to the class-II aminoacyl-tRNA synthetase family. Type-1 seryl-tRNA synthetase subfamily. As to quaternary structure, homodimer. The tRNA molecule binds across the dimer.

Its subcellular location is the cytoplasm. The enzyme catalyses tRNA(Ser) + L-serine + ATP = L-seryl-tRNA(Ser) + AMP + diphosphate + H(+). The catalysed reaction is tRNA(Sec) + L-serine + ATP = L-seryl-tRNA(Sec) + AMP + diphosphate + H(+). It participates in aminoacyl-tRNA biosynthesis; selenocysteinyl-tRNA(Sec) biosynthesis; L-seryl-tRNA(Sec) from L-serine and tRNA(Sec): step 1/1. Its function is as follows. Catalyzes the attachment of serine to tRNA(Ser). Is also able to aminoacylate tRNA(Sec) with serine, to form the misacylated tRNA L-seryl-tRNA(Sec), which will be further converted into selenocysteinyl-tRNA(Sec). This is Serine--tRNA ligase from Thermobifida fusca (strain YX).